We begin with the raw amino-acid sequence, 657 residues long: Threonine--tRNA ligase (657 aa).

The region spanning 7-70 (ILAVIALTLP…TADAAIEIIT (64 aa)) is the TGS domain. The interval 253-555 (DHRKLGAELE…LIEHTAGNFP (303 aa)) is catalytic. Residues C351, H402, and H532 each coordinate Zn(2+).

The protein belongs to the class-II aminoacyl-tRNA synthetase family. Homodimer. Zn(2+) serves as cofactor.

The protein resides in the cytoplasm. It carries out the reaction tRNA(Thr) + L-threonine + ATP = L-threonyl-tRNA(Thr) + AMP + diphosphate + H(+). Functionally, catalyzes the attachment of threonine to tRNA(Thr) in a two-step reaction: L-threonine is first activated by ATP to form Thr-AMP and then transferred to the acceptor end of tRNA(Thr). Also edits incorrectly charged L-seryl-tRNA(Thr). The protein is Threonine--tRNA ligase of Pelodictyon phaeoclathratiforme (strain DSM 5477 / BU-1).